Reading from the N-terminus, the 115-residue chain is NAD(P)H-quinone oxidoreductase subunit M (115 aa).

The protein belongs to the complex I NdhM subunit family. NDH-1 can be composed of about 15 different subunits; different subcomplexes with different compositions have been identified which probably have different functions.

The protein resides in the cellular thylakoid membrane. The catalysed reaction is a plastoquinone + NADH + (n+1) H(+)(in) = a plastoquinol + NAD(+) + n H(+)(out). It catalyses the reaction a plastoquinone + NADPH + (n+1) H(+)(in) = a plastoquinol + NADP(+) + n H(+)(out). Its function is as follows. NDH-1 shuttles electrons from an unknown electron donor, via FMN and iron-sulfur (Fe-S) centers, to quinones in the respiratory and/or the photosynthetic chain. The immediate electron acceptor for the enzyme in this species is believed to be plastoquinone. Couples the redox reaction to proton translocation, and thus conserves the redox energy in a proton gradient. Cyanobacterial NDH-1 also plays a role in inorganic carbon-concentration. The protein is NAD(P)H-quinone oxidoreductase subunit M of Prochlorococcus marinus (strain MIT 9303).